Consider the following 352-residue polypeptide: Photosystem II protein D1 (352 aa).

Thr-2 is modified (N-acetylthreonine). Phosphothreonine is present on Thr-2. The next 3 helical transmembrane spans lie at 29–46 (YIGW…TATS), 118–133 (HFFL…EWEL), and 142–156 (WIAV…AATA). Residue His-118 participates in chlorophyll a binding. Residue Tyr-126 participates in pheophytin a binding. [CaMn4O5] cluster contacts are provided by Asp-170 and Glu-189. The chain crosses the membrane as a helical span at residues 197 to 218 (FHMLGVAGVFGGSLFSAMHGSL). His-198 is a chlorophyll a binding site. Residues His-215 and 264 to 265 (SF) contribute to the a quinone site. His-215 provides a ligand contact to Fe cation. His-272 is a Fe cation binding site. Residues 274–288 (FLAAWPVVGIWFTAL) traverse the membrane as a helical segment. 4 residues coordinate [CaMn4O5] cluster: His-332, Glu-333, Asp-342, and Ala-344. Residues 345 to 352 (SVEAPSIA) constitute a propeptide that is removed on maturation.

It belongs to the reaction center PufL/M/PsbA/D family. PSII is composed of 1 copy each of membrane proteins PsbA, PsbB, PsbC, PsbD, PsbE, PsbF, PsbH, PsbI, PsbJ, PsbK, PsbL, PsbM, PsbT, PsbX, PsbY, PsbZ, Psb30/Ycf12, at least 3 peripheral proteins of the oxygen-evolving complex and a large number of cofactors. It forms dimeric complexes. The D1/D2 heterodimer binds P680, chlorophylls that are the primary electron donor of PSII, and subsequent electron acceptors. It shares a non-heme iron and each subunit binds pheophytin, quinone, additional chlorophylls, carotenoids and lipids. D1 provides most of the ligands for the Mn4-Ca-O5 cluster of the oxygen-evolving complex (OEC). There is also a Cl(-1) ion associated with D1 and D2, which is required for oxygen evolution. The PSII complex binds additional chlorophylls, carotenoids and specific lipids. serves as cofactor. In terms of processing, tyr-161 forms a radical intermediate that is referred to as redox-active TyrZ, YZ or Y-Z. C-terminally processed by CTPA; processing is essential to allow assembly of the oxygen-evolving complex and thus photosynthetic growth.

The protein localises to the plastid. The protein resides in the chloroplast thylakoid membrane. It carries out the reaction 2 a plastoquinone + 4 hnu + 2 H2O = 2 a plastoquinol + O2. Its function is as follows. Photosystem II (PSII) is a light-driven water:plastoquinone oxidoreductase that uses light energy to abstract electrons from H(2)O, generating O(2) and a proton gradient subsequently used for ATP formation. It consists of a core antenna complex that captures photons, and an electron transfer chain that converts photonic excitation into a charge separation. The D1/D2 (PsbA/PsbD) reaction center heterodimer binds P680, the primary electron donor of PSII as well as several subsequent electron acceptors. This is Photosystem II protein D1 from Chlorella ellipsoidea.